A 373-amino-acid polypeptide reads, in one-letter code: Dual-specificity RNA methyltransferase RlmN (373 aa).

Residue Glu-94 is the Proton acceptor of the active site. The Radical SAM core domain maps to 100 to 339 (EDDRATLCVS…VIVRKTRGDD (240 aa)). An intrachain disulfide couples Cys-107 to Cys-344. 3 residues coordinate [4Fe-4S] cluster: Cys-114, Cys-118, and Cys-121. S-adenosyl-L-methionine is bound by residues 168-169 (GE), Ser-200, 222-224 (SIH), and Asn-301. The active-site S-methylcysteine intermediate is Cys-344.

This sequence belongs to the radical SAM superfamily. RlmN family. It depends on [4Fe-4S] cluster as a cofactor.

The protein resides in the cytoplasm. It carries out the reaction adenosine(2503) in 23S rRNA + 2 reduced [2Fe-2S]-[ferredoxin] + 2 S-adenosyl-L-methionine = 2-methyladenosine(2503) in 23S rRNA + 5'-deoxyadenosine + L-methionine + 2 oxidized [2Fe-2S]-[ferredoxin] + S-adenosyl-L-homocysteine. The enzyme catalyses adenosine(37) in tRNA + 2 reduced [2Fe-2S]-[ferredoxin] + 2 S-adenosyl-L-methionine = 2-methyladenosine(37) in tRNA + 5'-deoxyadenosine + L-methionine + 2 oxidized [2Fe-2S]-[ferredoxin] + S-adenosyl-L-homocysteine. Specifically methylates position 2 of adenine 2503 in 23S rRNA and position 2 of adenine 37 in tRNAs. m2A2503 modification seems to play a crucial role in the proofreading step occurring at the peptidyl transferase center and thus would serve to optimize ribosomal fidelity. This Shewanella baltica (strain OS223) protein is Dual-specificity RNA methyltransferase RlmN.